Here is a 501-residue protein sequence, read N- to C-terminus: Ribose import ATP-binding protein RbsA (501 aa).

2 ABC transporter domains span residues 6-242 (LQLS…VGRK) and 253-495 (VHGQ…VGKK). ATP is bound at residue 38–45 (GENGAGKS).

The protein belongs to the ABC transporter superfamily. Ribose importer (TC 3.A.1.2.1) family. In terms of assembly, the complex is composed of an ATP-binding protein (RbsA), two transmembrane proteins (RbsC) and a solute-binding protein (RbsB).

The protein resides in the cell inner membrane. The enzyme catalyses D-ribose(out) + ATP + H2O = D-ribose(in) + ADP + phosphate + H(+). Functionally, part of the ABC transporter complex RbsABC involved in ribose import. Responsible for energy coupling to the transport system. In Vibrio vulnificus (strain YJ016), this protein is Ribose import ATP-binding protein RbsA.